A 271-amino-acid chain; its full sequence is Phosphonoacetaldehyde hydrolase (271 aa).

Asp12 functions as the Nucleophile in the catalytic mechanism. 2 residues coordinate Mg(2+): Asp12 and Ala14. Catalysis depends on Lys54, which acts as the Schiff-base intermediate with substrate. Asp188 contributes to the Mg(2+) binding site.

This sequence belongs to the HAD-like hydrolase superfamily. PhnX family. Homodimer. Mg(2+) is required as a cofactor.

The catalysed reaction is phosphonoacetaldehyde + H2O = acetaldehyde + phosphate + H(+). In terms of biological role, involved in phosphonate degradation. In Vibrio parahaemolyticus serotype O3:K6 (strain RIMD 2210633), this protein is Phosphonoacetaldehyde hydrolase.